Reading from the N-terminus, the 508-residue chain is ADP-ribosylarginine hydrolase CG3568 (508 aa).

The ADP-D-ribose site is built by Arg209, Gly349, Gly351, Gly353, Val354, Trp355, Trp390, Asp441, Asn448, Glu449, Gly459, and Asp460.

It carries out the reaction N(omega)-(ADP-D-ribosyl)-L-arginyl-[protein] + H2O = ADP-D-ribose + L-arginyl-[protein]. The catalysed reaction is N(omega)-(ADP-D-ribosyl)-L-arginine + H2O = ADP-D-ribose + L-arginine. Functionally, protein ADP-ribosyl hydrolase that specifically removes mono-ADP-ribosyl modifications from protein arginine residues. This Drosophila melanogaster (Fruit fly) protein is ADP-ribosylarginine hydrolase CG3568.